A 282-amino-acid chain; its full sequence is V-set domain-containing T-cell activation inhibitor 1 (282 aa).

Positions 1–24 (MASLGQIIFWSIINVIIILAGAIV) are cleaved as a signal peptide. Ig-like V-type domains are found at residues 35–144 (HFIT…ANLE) and 153–241 (PEIN…IKVT). Disulfide bonds link Cys56–Cys130 and Cys168–Cys225. The N-linked (GlcNAc...) asparagine glycan is linked to Asn216. The GPI-anchor amidated glycine moiety is linked to residue Gly257. Residues 258–282 (PSPCVSSVSAAGWALLSLSCCLMLR) constitute a propeptide, removed in mature form.

It belongs to the immunoglobulin superfamily. BTN/MOG family. N-glycosylated.

It is found in the cell membrane. Its function is as follows. Negatively regulates T-cell-mediated immune response by inhibiting T-cell activation, proliferation, cytokine production and development of cytotoxicity. When expressed on the cell surface of tumor macrophages, plays an important role, together with regulatory T-cells (Treg), in the suppression of tumor-associated antigen-specific T-cell immunity. Involved in promoting epithelial cell transformation. In Rattus norvegicus (Rat), this protein is V-set domain-containing T-cell activation inhibitor 1.